The primary structure comprises 181 residues: Large ribosomal subunit protein uL5 (181 aa).

It belongs to the universal ribosomal protein uL5 family. Part of the 50S ribosomal subunit; part of the 5S rRNA/L5/L18/L25 subcomplex. Contacts the 5S rRNA and the P site tRNA. Forms a bridge to the 30S subunit in the 70S ribosome.

In terms of biological role, this is one of the proteins that bind and probably mediate the attachment of the 5S RNA into the large ribosomal subunit, where it forms part of the central protuberance. In the 70S ribosome it contacts protein S13 of the 30S subunit (bridge B1b), connecting the 2 subunits; this bridge is implicated in subunit movement. Contacts the P site tRNA; the 5S rRNA and some of its associated proteins might help stabilize positioning of ribosome-bound tRNAs. The chain is Large ribosomal subunit protein uL5 from Helicobacter pylori (strain HPAG1).